Reading from the N-terminus, the 361-residue chain is Ribosomal RNA large subunit methyltransferase M (361 aa).

S-adenosyl-L-methionine-binding positions include Ser-187, 220-223, Asp-239, Asp-259, and Asp-276; that span reads CPGG. Catalysis depends on Lys-305, which acts as the Proton acceptor.

The protein belongs to the class I-like SAM-binding methyltransferase superfamily. RNA methyltransferase RlmE family. RlmM subfamily. As to quaternary structure, monomer.

It is found in the cytoplasm. It catalyses the reaction cytidine(2498) in 23S rRNA + S-adenosyl-L-methionine = 2'-O-methylcytidine(2498) in 23S rRNA + S-adenosyl-L-homocysteine + H(+). Catalyzes the 2'-O-methylation at nucleotide C2498 in 23S rRNA. In Shewanella sp. (strain MR-7), this protein is Ribosomal RNA large subunit methyltransferase M.